The primary structure comprises 258 residues: 3-deoxy-manno-octulosonate cytidylyltransferase (258 aa).

This sequence belongs to the KdsB family.

Its subcellular location is the cytoplasm. The catalysed reaction is 3-deoxy-alpha-D-manno-oct-2-ulosonate + CTP = CMP-3-deoxy-beta-D-manno-octulosonate + diphosphate. The protein operates within nucleotide-sugar biosynthesis; CMP-3-deoxy-D-manno-octulosonate biosynthesis; CMP-3-deoxy-D-manno-octulosonate from 3-deoxy-D-manno-octulosonate and CTP: step 1/1. It functions in the pathway bacterial outer membrane biogenesis; lipopolysaccharide biosynthesis. In terms of biological role, activates KDO (a required 8-carbon sugar) for incorporation into bacterial lipopolysaccharide in Gram-negative bacteria. The protein is 3-deoxy-manno-octulosonate cytidylyltransferase of Pasteurella multocida (strain Pm70).